The chain runs to 549 residues: Copalyl diphosphate synthase (549 aa).

The DXDDTA motif motif lies at 321 to 326; it reads DADDTA. The QXXDGSW motif signature appears at 451-457; that stretch reads QRDDGSW.

Belongs to the terpene synthase family. It depends on Mg(2+) as a cofactor.

The catalysed reaction is (2E,6E,10E)-geranylgeranyl diphosphate = (+)-copalyl diphosphate. Its function is as follows. Involved in the biosynthesis of the labdane-type bicyclic diterpene labda-8(17),12(E),14-triene. Catalyzes the conversion of geranylgeranyl diphosphate (GGDP) into (+)-copalyl diphosphate. The protein is Copalyl diphosphate synthase of Streptomyces anulatus (Streptomyces chrysomallus).